The chain runs to 97 residues: Co-chaperonin GroES (97 aa).

The protein belongs to the GroES chaperonin family. In terms of assembly, heptamer of 7 subunits arranged in a ring. Interacts with the chaperonin GroEL.

The protein localises to the cytoplasm. Together with the chaperonin GroEL, plays an essential role in assisting protein folding. The GroEL-GroES system forms a nano-cage that allows encapsulation of the non-native substrate proteins and provides a physical environment optimized to promote and accelerate protein folding. GroES binds to the apical surface of the GroEL ring, thereby capping the opening of the GroEL channel. The chain is Co-chaperonin GroES from Pseudomonas putida (Arthrobacter siderocapsulatus).